A 121-amino-acid chain; its full sequence is Outer membrane lipoprotein BBA14 (121 aa).

Positions Met1–Ser19 are cleaved as a signal peptide. Residue Cys20 is the site of N-palmitoyl cysteine attachment. Cys20 is lipidated: S-diacylglycerol cysteine.

The protein localises to the cell outer membrane. Outer membrane lipoprotein that could act as a component of a potential toxin-antitoxin system in B.burgdorferi which could serve as a plasmid stabilization mechanism in a growing bacterial population. The chain is Outer membrane lipoprotein BBA14 from Borreliella burgdorferi (strain ATCC 35210 / DSM 4680 / CIP 102532 / B31) (Borrelia burgdorferi).